The primary structure comprises 541 residues: Tegument protein UL21 homolog (541 aa).

This sequence belongs to the alphaherpesvirinae UL21 protein family. Interacts (via C-terminus) with UL16.

The protein resides in the virion tegument. It localises to the host cytoplasm. The protein localises to the host nucleus. Its function is as follows. May participate in DNA packaging/capsid maturation events. Promotes efficient incorporation of tegument proteins UL46, UL49, and US3 homologs into virions. May also play a role in capsid transport to the trans-Golgi network (TGN). In Homo sapiens (Human), this protein is Tegument protein UL21 homolog.